Here is a 356-residue protein sequence, read N- to C-terminus: Phosphoserine aminotransferase (356 aa).

L-glutamate is bound at residue Arg-41. Pyridoxal 5'-phosphate contacts are provided by residues 75-76 (AS), Trp-99, Thr-147, Asp-166, and Gln-189. Residue Lys-190 is modified to N6-(pyridoxal phosphate)lysine. Residue 231–232 (NT) participates in pyridoxal 5'-phosphate binding.

This sequence belongs to the class-V pyridoxal-phosphate-dependent aminotransferase family. SerC subfamily. Homodimer. It depends on pyridoxal 5'-phosphate as a cofactor.

Its subcellular location is the cytoplasm. The enzyme catalyses O-phospho-L-serine + 2-oxoglutarate = 3-phosphooxypyruvate + L-glutamate. It catalyses the reaction 4-(phosphooxy)-L-threonine + 2-oxoglutarate = (R)-3-hydroxy-2-oxo-4-phosphooxybutanoate + L-glutamate. The protein operates within amino-acid biosynthesis; L-serine biosynthesis; L-serine from 3-phospho-D-glycerate: step 2/3. It participates in cofactor biosynthesis; pyridoxine 5'-phosphate biosynthesis; pyridoxine 5'-phosphate from D-erythrose 4-phosphate: step 3/5. In terms of biological role, catalyzes the reversible conversion of 3-phosphohydroxypyruvate to phosphoserine and of 3-hydroxy-2-oxo-4-phosphonooxybutanoate to phosphohydroxythreonine. This chain is Phosphoserine aminotransferase, found in Phocaeicola vulgatus (strain ATCC 8482 / DSM 1447 / JCM 5826 / CCUG 4940 / NBRC 14291 / NCTC 11154) (Bacteroides vulgatus).